A 185-amino-acid polypeptide reads, in one-letter code: Nuclear transcription factor Y subunit B-3 (185 aa).

Residues 1 to 36 (MADGPGSPGGGGGSHESGSPRGGGGGGGGGGGGGGV) are compositionally biased toward gly residues. The tract at residues 1-39 (MADGPGSPGGGGGSHESGSPRGGGGGGGGGGGGGGVREQ) is disordered. Residues 43 to 49 (LPIANIS) mediate DNA binding. The subunit association domain (SAD) stretch occupies residues 70–81 (VQECVSEFISFI). A disordered region spans residues 145–164 (KDVLGSHGGSSSSAQGMGQQ). Residues 153-164 (GSSSSAQGMGQQ) show a composition bias toward low complexity.

It belongs to the NFYB/HAP3 subunit family. In terms of assembly, heterotrimeric transcription factor composed of three components, NF-YA, NF-YB and NF-YC. NF-YB and NF-YC must interact and dimerize for NF-YA association and DNA binding. In terms of tissue distribution, ubiquitous.

It localises to the nucleus. In terms of biological role, component of the NF-Y/HAP transcription factor complex. The NF-Y complex stimulates the transcription of various genes by recognizing and binding to a CCAAT motif in promoters. May regulate the expression of photosynthetic genes, and may be involved in chloroplast and amyloplast development. This chain is Nuclear transcription factor Y subunit B-3 (NFYB3), found in Oryza sativa subsp. japonica (Rice).